The sequence spans 370 residues: D-alanine--D-alanine ligase (370 aa).

An ATP-grasp domain is found at Lys144–Asp352. Glu177–Glu232 serves as a coordination point for ATP. Residues Asp306, Glu319, and Asn321 each coordinate Mg(2+).

This sequence belongs to the D-alanine--D-alanine ligase family. It depends on Mg(2+) as a cofactor. The cofactor is Mn(2+).

It localises to the cytoplasm. The catalysed reaction is 2 D-alanine + ATP = D-alanyl-D-alanine + ADP + phosphate + H(+). It participates in cell wall biogenesis; peptidoglycan biosynthesis. Cell wall formation. The sequence is that of D-alanine--D-alanine ligase from Listeria monocytogenes serotype 4b (strain F2365).